We begin with the raw amino-acid sequence, 482 residues long: Pyruvate kinase (482 aa).

Residue R37 coordinates substrate. K(+) is bound by residues N39, S41, and D71. An ATP-binding site is contributed by N39 to H42. R78 and K160 together coordinate ATP. E222 provides a ligand contact to Mg(2+). The substrate site is built by G245, D246, and T278. Position 246 (D246) interacts with Mg(2+).

This sequence belongs to the pyruvate kinase family. As to quaternary structure, homotetramer. Requires Mg(2+) as cofactor. The cofactor is K(+).

It catalyses the reaction pyruvate + ATP = phosphoenolpyruvate + ADP + H(+). It functions in the pathway carbohydrate degradation; glycolysis; pyruvate from D-glyceraldehyde 3-phosphate: step 5/5. The chain is Pyruvate kinase (ttuE) from Agrobacterium vitis (Rhizobium vitis).